Consider the following 1368-residue polypeptide: DNA-directed RNA polymerase subunit beta (1368 aa).

This sequence belongs to the RNA polymerase beta chain family. As to quaternary structure, the RNAP catalytic core consists of 2 alpha, 1 beta, 1 beta' and 1 omega subunit. When a sigma factor is associated with the core the holoenzyme is formed, which can initiate transcription.

It catalyses the reaction RNA(n) + a ribonucleoside 5'-triphosphate = RNA(n+1) + diphosphate. Functionally, DNA-dependent RNA polymerase catalyzes the transcription of DNA into RNA using the four ribonucleoside triphosphates as substrates. The chain is DNA-directed RNA polymerase subunit beta from Legionella pneumophila (strain Corby).